A 191-amino-acid chain; its full sequence is Guanylate kinase (191 aa).

Residues 4 to 182 enclose the Guanylate kinase-like domain; sequence GRLIVVSGPS…AREEMIEIMR (179 aa). 11–18 serves as a coordination point for ATP; that stretch reads GPSGAGKS.

This sequence belongs to the guanylate kinase family.

The protein resides in the cytoplasm. It catalyses the reaction GMP + ATP = GDP + ADP. Essential for recycling GMP and indirectly, cGMP. The protein is Guanylate kinase of Rubrobacter xylanophilus (strain DSM 9941 / JCM 11954 / NBRC 16129 / PRD-1).